The following is a 346-amino-acid chain: Methylthioribose-1-phosphate isomerase (346 aa).

Substrate-binding positions include 44-46, R87, and Q194; that span reads RGA. D235 (proton donor) is an active-site residue. Residue 245–246 coordinates substrate; it reads NK.

The protein belongs to the eIF-2B alpha/beta/delta subunits family. MtnA subfamily.

It carries out the reaction 5-(methylsulfanyl)-alpha-D-ribose 1-phosphate = 5-(methylsulfanyl)-D-ribulose 1-phosphate. The protein operates within amino-acid biosynthesis; L-methionine biosynthesis via salvage pathway; L-methionine from S-methyl-5-thio-alpha-D-ribose 1-phosphate: step 1/6. In terms of biological role, catalyzes the interconversion of methylthioribose-1-phosphate (MTR-1-P) into methylthioribulose-1-phosphate (MTRu-1-P). In Desulforamulus reducens (strain ATCC BAA-1160 / DSM 100696 / MI-1) (Desulfotomaculum reducens), this protein is Methylthioribose-1-phosphate isomerase.